The following is a 455-amino-acid chain: Differentiation-associated protein 1 (455 aa).

The signal sequence occupies residues 1–21 (MKFKLFLLVFFVFLLPYLSQS). The segment at 349 to 434 (IGSSSSSSSS…SDDDLGNPSS (86 aa)) is disordered. A compositionally biased stretch (low complexity) spans 351–423 (SSSSSSSSSS…KSNHTSSESS (73 aa)). A lipid anchor (GPI-like-anchor amidated serine) is attached at serine 433. A propeptide spans 434–455 (SSSILSVSKLIILLISIILYCF) (removed in mature form).

The protein localises to the cell membrane. Plays a role in differentiation. In Dictyostelium discoideum (Social amoeba), this protein is Differentiation-associated protein 1 (dia1).